The primary structure comprises 55 residues: DNA-directed RNA polymerase subunit Rpo10 (55 aa).

Residues cysteine 6, cysteine 9, cysteine 43, and cysteine 44 each contribute to the Zn(2+) site.

It belongs to the archaeal Rpo10/eukaryotic RPB10 RNA polymerase subunit family. As to quaternary structure, part of the RNA polymerase complex. It depends on Zn(2+) as a cofactor.

The protein localises to the cytoplasm. The catalysed reaction is RNA(n) + a ribonucleoside 5'-triphosphate = RNA(n+1) + diphosphate. DNA-dependent RNA polymerase (RNAP) catalyzes the transcription of DNA into RNA using the four ribonucleoside triphosphates as substrates. The polypeptide is DNA-directed RNA polymerase subunit Rpo10 (Methanothermobacter thermautotrophicus (strain ATCC 29096 / DSM 1053 / JCM 10044 / NBRC 100330 / Delta H) (Methanobacterium thermoautotrophicum)).